A 314-amino-acid polypeptide reads, in one-letter code: Malate dehydrogenase (314 aa).

NAD(+) is bound by residues Gly11–Gly16 and Asp35. Positions 84 and 90 each coordinate substrate. NAD(+)-binding positions include Asn97 and Ile120–Asn122. Asn122 and Arg153 together coordinate substrate. The active-site Proton acceptor is the His177.

Belongs to the LDH/MDH superfamily. MDH type 3 family.

It carries out the reaction (S)-malate + NAD(+) = oxaloacetate + NADH + H(+). In terms of biological role, catalyzes the reversible oxidation of malate to oxaloacetate. This Rickettsia typhi (strain ATCC VR-144 / Wilmington) protein is Malate dehydrogenase.